The primary structure comprises 201 residues: Arachin 25 kDa protein (201 aa).

As to quaternary structure, this is one of six apparently different protein chains that constitute the peanut protein arachin.

The chain is Arachin 25 kDa protein from Arachis hypogaea (Peanut).